Here is a 128-residue protein sequence, read N- to C-terminus: Virion-associated protein (128 aa).

Coiled-coil stretches lie at residues 1–30 (MNLA…ILAK) and 37–58 (ESSN…EMKE). The interval 98 to 128 (FDVGNEGMGSSTNPNALKWPPTEKPQPWPPR) is disordered. Residues 119–128 (TEKPQPWPPR) show a composition bias toward pro residues. Residues 122 to 128 (PQPWPPR) are capsid binding.

It belongs to the caulimovirus ORF III family. Homotetramer, through coiled-coil domain. Homotrimer when interacts with icosehadral capsid. Interacts with capsid protein, and with Movement protein.

Its subcellular location is the virion. It is found in the host cell junction. It localises to the host plasmodesma. Its function is as follows. Plays a role in virus cell-to-cell and plant-to-plant transmission. Interacts with virion icosahedral capsid and movement protein, thereby facilitating virion cell-to-cell transmission through plasmodesmata opened by viral movement protein. Also interacts with aphid transmission factor, attaching the virion to aphid stylet when the animal feeds on an virus infected plant. Aphid saliva may later detach the virion, inducing release of infectious particles when the animal feeds on a new plant. This chain is Virion-associated protein, found in Carnation etched ring virus (CERV).